The primary structure comprises 46 residues: uncharacterized protein (46 aa).

Residues 20–42 traverse the membrane as a helical segment; that stretch reads MAMIWVVAALVIALVVGTALNYI.

Its subcellular location is the membrane. This is an uncharacterized protein from Bacillus subtilis (strain 168).